The chain runs to 238 residues: 14-3-3 family protein artA (238 aa).

Belongs to the 14-3-3 family.

14-3-3 family protein that plays a role in the morphological differentiation and secondary metabolism biosynthesis. Required for normal fungal morphogenesis in an environment-dependent manner, affecting the balance between production of conidiophores and the formation of sclerotia, resistant structures that are necessary for the dissemination and survival. Acts as a positive regulator of conidiation and a negative regulator of sclerotial production. Also regulates the production of secondary metabolites such as aflatoxin, but also the indole-tetramic acid mycotoxin cyclopiazonic acid (CPA) and ustiloxin, an inhibitor of microtubule assembly. This chain is 14-3-3 family protein artA, found in Aspergillus flavus (strain ATCC 200026 / FGSC A1120 / IAM 13836 / NRRL 3357 / JCM 12722 / SRRC 167).